A 423-amino-acid polypeptide reads, in one-letter code: Glucose-1-phosphate adenylyltransferase (423 aa).

Alpha-D-glucose 1-phosphate is bound by residues tyrosine 100, glycine 165, 180 to 181, and serine 191; that span reads EK.

It belongs to the bacterial/plant glucose-1-phosphate adenylyltransferase family. In terms of assembly, homotetramer.

It catalyses the reaction alpha-D-glucose 1-phosphate + ATP + H(+) = ADP-alpha-D-glucose + diphosphate. Its pathway is glycan biosynthesis; glycogen biosynthesis. In terms of biological role, involved in the biosynthesis of ADP-glucose, a building block required for the elongation reactions to produce glycogen. Catalyzes the reaction between ATP and alpha-D-glucose 1-phosphate (G1P) to produce pyrophosphate and ADP-Glc. The polypeptide is Glucose-1-phosphate adenylyltransferase (Lachnospira eligens (strain ATCC 27750 / DSM 3376 / VPI C15-48 / C15-B4) (Eubacterium eligens)).